The chain runs to 614 residues: Sodium- and chloride-dependent betaine transporter (614 aa).

The Cytoplasmic portion of the chain corresponds to Met1–Glu44. The next 3 membrane-spanning stretches (helical) occupy residues Phe45 to Leu65, Ala73 to Leu92, and Gly117 to Leu137. Topologically, residues Ala138–Arg210 are extracellular. Cys157 and Cys166 form a disulfide bridge. Asn171 and Asn183 each carry an N-linked (GlcNAc...) asparagine glycan. Transmembrane regions (helical) follow at residues Trp211–Trp229, Val238–Ile255, Ile291–Tyr308, Ile320–Leu341, Met374–Leu393, Leu423–Thr441, Gly458–Ala478, Ile499–Ser518, and Ile538–Ile556. Over Thr557 to Leu614 the chain is Cytoplasmic. A disordered region spans residues Asp576–Leu614.

Belongs to the sodium:neurotransmitter symporter (SNF) (TC 2.A.22) family. SLC6A12 subfamily. In terms of assembly, interacts with LIN7C. As to expression, expressed in kidney, liver, heart, skeletal muscle, placenta, and a widespread distribution in the brain.

The protein resides in the basolateral cell membrane. It localises to the cell membrane. It catalyses the reaction 4-aminobutanoate(out) + chloride(out) + 3 Na(+)(out) = 4-aminobutanoate(in) + chloride(in) + 3 Na(+)(in). The enzyme catalyses glycine betaine(out) + 2 chloride(out) + 3 Na(+)(out) = glycine betaine(in) + 2 chloride(in) + 3 Na(+)(in). Its function is as follows. Transporter that mediates cellular uptake of betaine and GABA in a sodium- and chloride-dependent process. May have a role in regulation of GABAergic transmission in the brain through the reuptake of GABA into presynaptic terminals, as well as in osmotic regulation. Probably also involved in renal and hepatic osmotic regulation. The polypeptide is Sodium- and chloride-dependent betaine transporter (Homo sapiens (Human)).